The sequence spans 495 residues: Glycerol kinase (495 aa).

Position 16 (Thr16) interacts with ADP. The ATP site is built by Thr16 and Thr17. Thr16 serves as a coordination point for sn-glycerol 3-phosphate. Arg20 is an ADP binding site. Residues Arg86, Glu87, Tyr138, and Asp246 each contribute to the sn-glycerol 3-phosphate site. 5 residues coordinate glycerol: Arg86, Glu87, Tyr138, Asp246, and Gln247. The ADP site is built by Thr268 and Gly316. Residues Thr268, Gly316, Gln320, and Gly417 each coordinate ATP. ADP-binding residues include Gly417 and Asn421.

Belongs to the FGGY kinase family.

The enzyme catalyses glycerol + ATP = sn-glycerol 3-phosphate + ADP + H(+). The protein operates within polyol metabolism; glycerol degradation via glycerol kinase pathway; sn-glycerol 3-phosphate from glycerol: step 1/1. With respect to regulation, inhibited by fructose 1,6-bisphosphate (FBP). Key enzyme in the regulation of glycerol uptake and metabolism. Catalyzes the phosphorylation of glycerol to yield sn-glycerol 3-phosphate. The polypeptide is Glycerol kinase (Synechocystis sp. (strain ATCC 27184 / PCC 6803 / Kazusa)).